We begin with the raw amino-acid sequence, 150 residues long: 3-hydroxyacyl-[acyl-carrier-protein] dehydratase FabZ (150 aa).

Histidine 51 is a catalytic residue.

This sequence belongs to the thioester dehydratase family. FabZ subfamily.

It is found in the cytoplasm. The enzyme catalyses a (3R)-hydroxyacyl-[ACP] = a (2E)-enoyl-[ACP] + H2O. Involved in unsaturated fatty acids biosynthesis. Catalyzes the dehydration of short chain beta-hydroxyacyl-ACPs and long chain saturated and unsaturated beta-hydroxyacyl-ACPs. In Legionella pneumophila (strain Lens), this protein is 3-hydroxyacyl-[acyl-carrier-protein] dehydratase FabZ.